The following is a 295-amino-acid chain: Protein transport protein SSO2 (295 aa).

Low complexity predominate over residues 1–18 (MSNPYQNSQNGYQQNNSY). The segment at 1 to 31 (MSNPYQNSQNGYQQNNSYELNNYPNKQYSSS) is disordered. The Cytoplasmic segment spans residues 1–270 (MSNPYQNSQN…SAKSARKKKL (270 aa)). Residues 19–31 (ELNNYPNKQYSSS) show a composition bias toward polar residues. The stretch at 33 to 110 (EDDFVQFMNE…NRIKNVQTQA (78 aa)) forms a coiled coil. The t-SNARE coiled-coil homology domain occupies 196–258 (LNEVQVRHRE…EQGVGHTNKA (63 aa)). The chain crosses the membrane as a helical; Anchor for type IV membrane protein span at residues 271 to 291 (WCFFICLLIVIILAVILGAYF). Over 292–295 (GTRK) the chain is Extracellular.

This sequence belongs to the syntaxin family.

The protein resides in the membrane. In terms of biological role, late secretory t-SNARE protein required for secretion and proper cytokinesis. Plays an important role in the secretion of virulence-associated extracellular enzymes and vesicle-mediated polarized hyphal growth. The sequence is that of Protein transport protein SSO2 (SSO2) from Candida albicans (strain SC5314 / ATCC MYA-2876) (Yeast).